The chain runs to 458 residues: Histidine--tRNA ligase (458 aa).

The protein belongs to the class-II aminoacyl-tRNA synthetase family. In terms of assembly, homodimer.

The protein localises to the cytoplasm. The enzyme catalyses tRNA(His) + L-histidine + ATP = L-histidyl-tRNA(His) + AMP + diphosphate + H(+). In Micrococcus luteus (strain ATCC 4698 / DSM 20030 / JCM 1464 / CCM 169 / CCUG 5858 / IAM 1056 / NBRC 3333 / NCIMB 9278 / NCTC 2665 / VKM Ac-2230) (Micrococcus lysodeikticus), this protein is Histidine--tRNA ligase.